The primary structure comprises 437 residues: Trigger factor (437 aa).

Residues 163 to 248 (DDRVTVDFEG…VKKIEASHLP (86 aa)) form the PPIase FKBP-type domain.

This sequence belongs to the FKBP-type PPIase family. Tig subfamily.

Its subcellular location is the cytoplasm. It catalyses the reaction [protein]-peptidylproline (omega=180) = [protein]-peptidylproline (omega=0). Involved in protein export. Acts as a chaperone by maintaining the newly synthesized protein in an open conformation. Functions as a peptidyl-prolyl cis-trans isomerase. This is Trigger factor from Variovorax paradoxus (strain S110).